The chain runs to 229 residues: MAKLTKKQKEAASKIEKNKLYSLKDAAALLKVVASAKFDESVDIAVRLGVDPRKANQMVRGVVTLPHGTGKDVKVLALVTPDKEAEAREAGADHVGLDDYLQKIKDGWTDVDVIITMPAVMGKLGPLGRILGPRGLMPNPKTGTVTMDVAKAVQEVKAGKIDFKVDKTGIVHAGIGKVSFGAEQIVDNAHEIIQTLIKLKPTAAKGTYIKGIHLTSTMSPAIALDPKAV.

It belongs to the universal ribosomal protein uL1 family. Part of the 50S ribosomal subunit.

Binds directly to 23S rRNA. The L1 stalk is quite mobile in the ribosome, and is involved in E site tRNA release. Functionally, protein L1 is also a translational repressor protein, it controls the translation of the L11 operon by binding to its mRNA. The chain is Large ribosomal subunit protein uL1 from Flavobacterium johnsoniae (strain ATCC 17061 / DSM 2064 / JCM 8514 / BCRC 14874 / CCUG 350202 / NBRC 14942 / NCIMB 11054 / UW101) (Cytophaga johnsonae).